The following is a 363-amino-acid chain: 5-formaminoimidazole-4-carboxamide-1-(beta)-D-ribofuranosyl 5'-monophosphate synthetase (363 aa).

5-amino-1-(5-phospho-beta-D-ribosyl)imidazole-4-carboxamide-binding residues include His-29 and Ser-96. The region spanning 118 to 354 (RDILRWEAER…ISREIKNAIE (237 aa)) is the ATP-grasp domain. Residues 148–210 (PEDI…TNFC) and Glu-232 contribute to the ATP site. Asn-260 contributes to the 5-amino-1-(5-phospho-beta-D-ribosyl)imidazole-4-carboxamide binding site. The Mg(2+) site is built by Gln-299 and Glu-312.

Belongs to the phosphohexose mutase family. Mg(2+) is required as a cofactor. The cofactor is Mn(2+).

The catalysed reaction is 5-amino-1-(5-phospho-beta-D-ribosyl)imidazole-4-carboxamide + formate + ATP = 5-formamido-1-(5-phospho-D-ribosyl)imidazole-4-carboxamide + ADP + phosphate. Its pathway is purine metabolism; IMP biosynthesis via de novo pathway; 5-formamido-1-(5-phospho-D-ribosyl)imidazole-4-carboxamide from 5-amino-1-(5-phospho-D-ribosyl)imidazole-4-carboxamide (formate route): step 1/1. Its function is as follows. Catalyzes the ATP- and formate-dependent formylation of 5-aminoimidazole-4-carboxamide-1-beta-d-ribofuranosyl 5'-monophosphate (AICAR) to 5-formaminoimidazole-4-carboxamide-1-beta-d-ribofuranosyl 5'-monophosphate (FAICAR) in the absence of folates. This Methanosphaera stadtmanae (strain ATCC 43021 / DSM 3091 / JCM 11832 / MCB-3) protein is 5-formaminoimidazole-4-carboxamide-1-(beta)-D-ribofuranosyl 5'-monophosphate synthetase.